The sequence spans 724 residues: MGLTSDEAKIIINTLGRNPTEAEWLIFEAEWSEHCSYKSSRAWIRLLPSKSPLVIRGSGLDAPIIRINNIAVTFKIESHNHPSAVDPYDGAATGVGGIVRDILTTGLRPIALLDNLHLGSLDNQRSLWLSRNIIKGISDYGNRIGVPVVGGETWFDESFNNNPIVLVTCIGAGDFKRVIWGEGKVGDLVLVVGNDTGRDGMLGSSFASRELSSSDDIGAVQVGNPLLEKLLIDALMELGERGLVKAIKDVGGGGLATALSELAHQLGLGIEVDLTNIRLRDELKPEEILVSESQERMIIVVDPSRLSYVEAVLRKYEVGFDLIGKLTNDGKFTAYYKGIKLIDLPLDLITNPPEPIRKYTEPVYLMRLRRIPPLPSVKFNEALIKVASSPNLASKEVIYTQYDYEVGVRTVIKPGRAGATVLRLLEEDGGDGKLGIAVKADSNPRYSYLNPFTGAANSLAKAYRNVASVGAKPIAAVDSINVGNPEKPDKYWYFVKTVEGLTWMGNALGIPFVGGKVSFYNEDSVTGASIKPVVAVAVLGVVNDYAKAIEGGLTGEGWLVIIGDTGPELGGSEFLHSVHGLVAGEPPEPKPLSEVKNANLVMQLINNGLAKAVMDVGVGGLAAALIKMSIIGGVGFTVDLSKAPLTQGLNDPVTVAFSETNARYIIETSNLKETVRIIEANGVPYGVLGESGGGIVQFKWGGLELASLSVDDLVSINDSLRGVI.

Residue His-34 is part of the active site. ATP is bound by residues Tyr-37 and Lys-75. Glu-77 is a Mg(2+) binding site. Residues Ser-78–His-81 and Arg-100 each bind substrate. His-79 acts as the Proton acceptor in catalysis. Asp-101 contributes to the Mg(2+) binding site. Residue Gln-221 coordinates substrate. Mg(2+) is bound at residue Asp-249. Glu-292–Gln-294 lines the substrate pocket. ATP contacts are provided by Asp-478 and Gly-515. Ser-518 contacts substrate.

This sequence belongs to the FGAMS family. Monomer. Part of the FGAM synthase complex composed of 1 PurL, 1 PurQ and 2 PurS subunits.

It localises to the cytoplasm. The catalysed reaction is N(2)-formyl-N(1)-(5-phospho-beta-D-ribosyl)glycinamide + L-glutamine + ATP + H2O = 2-formamido-N(1)-(5-O-phospho-beta-D-ribosyl)acetamidine + L-glutamate + ADP + phosphate + H(+). It functions in the pathway purine metabolism; IMP biosynthesis via de novo pathway; 5-amino-1-(5-phospho-D-ribosyl)imidazole from N(2)-formyl-N(1)-(5-phospho-D-ribosyl)glycinamide: step 1/2. In terms of biological role, part of the phosphoribosylformylglycinamidine synthase complex involved in the purines biosynthetic pathway. Catalyzes the ATP-dependent conversion of formylglycinamide ribonucleotide (FGAR) and glutamine to yield formylglycinamidine ribonucleotide (FGAM) and glutamate. The FGAM synthase complex is composed of three subunits. PurQ produces an ammonia molecule by converting glutamine to glutamate. PurL transfers the ammonia molecule to FGAR to form FGAM in an ATP-dependent manner. PurS interacts with PurQ and PurL and is thought to assist in the transfer of the ammonia molecule from PurQ to PurL. This Caldivirga maquilingensis (strain ATCC 700844 / DSM 13496 / JCM 10307 / IC-167) protein is Phosphoribosylformylglycinamidine synthase subunit PurL.